The sequence spans 658 residues: Alkyldihydroxyacetonephosphate synthase, peroxisomal (658 aa).

Positions 1–24 (MAEAAAAAAAAAAAGETSASSGSA) are enriched in low complexity. The tract at residues 1–37 (MAEAAAAAAAAAAAGETSASSGSAAERDPDQDRAGRR) is disordered. The N-terminal 58 residues, 1-58 (MAEAAAAAAAAAAAGETSASSGSAAERDPDQDRAGRRLRVLSGHLLGRPQEALSTNEC), are a transit peptide targeting the peroxisome. Basic and acidic residues predominate over residues 25-35 (AERDPDQDRAG). Serine 65 is subject to Phosphoserine. Threonine 74 bears the Phosphothreonine mark. Position 102 is an N6-acetyllysine (lysine 102). Residues 202-384 (FERIPDIVLW…TEATIKIRPT (183 aa)) form the FAD-binding PCMH-type domain. Residues 234 to 240 (PIGGGTS), 303 to 309 (DSLEFST), and 316 to 319 (TRAS) each bind FAD. Lysine 347 is modified (N6-acetyllysine). Residue 368–374 (EGTLGVI) coordinates FAD. Arginine 515 serves as a coordination point for substrate. Residue tyrosine 578 is the Proton donor/acceptor of the active site. Important for enzyme activity stretches follow at residues 615–617 (HHH) and 654–658 (NRNLL).

Belongs to the FAD-binding oxidoreductase/transferase type 4 family. In terms of assembly, homodimer. It depends on FAD as a cofactor.

It is found in the peroxisome membrane. The protein localises to the peroxisome. It catalyses the reaction a long chain fatty alcohol + a 1-acylglycerone 3-phosphate = a 1-O-alkylglycerone 3-phosphate + a long-chain fatty acid + H(+). It carries out the reaction hexadecan-1-ol + 1-hexadecanoylglycerone 3-phosphate = 1-O-hexadecylglycerone 3-phosphate + hexadecanoate + H(+). The catalysed reaction is 1-hexadecanoylglycerone 3-phosphate + a long-chain fatty acid = a 1-acylglycerone 3-phosphate + hexadecanoate. It participates in glycerolipid metabolism; ether lipid biosynthesis. With respect to regulation, inhibited by N-ethylmaleimide, p-bromophenacylbromide, 2,4- dinitrofluorobenzene and divalent cations such as such as Mn(2+), Mg(2+) and Zn(2+). Inhibition by p-bromophenacylbromide is strongly pH dependent and is highest at alkaline conditions. Catalyzes the exchange of the acyl chain in acyl-dihydroxyacetonephosphate (acyl-DHAP) for a long chain fatty alcohol, yielding the first ether linked intermediate, i.e. alkyl-dihydroxyacetonephosphate (alkyl-DHAP), in the pathway of ether lipid biosynthesis. This is Alkyldihydroxyacetonephosphate synthase, peroxisomal (AGPS) from Cavia porcellus (Guinea pig).